We begin with the raw amino-acid sequence, 295 residues long: Probable isochorismatase (295 aa).

The tract at residues 1–21 (MGIPKIAGYPLPTPAEFPDNR) is disordered. Positions 207 to 286 (EIRSQKPLTL…EWWLVIEQAR (80 aa)) constitute a Carrier domain. The residue at position 247 (serine 247) is an O-(pantetheine 4'-phosphoryl)serine.

The protein belongs to the isochorismatase family. Pantetheine 4'-phosphate serves as cofactor.

It carries out the reaction isochorismate + H2O = (2S,3S)-2,3-dihydroxy-2,3-dihydrobenzoate + pyruvate. Its pathway is siderophore biosynthesis; vulnibactin biosynthesis. Its function is as follows. Involved in the biosynthesis of the catechol siderophore vulnibactin. Vulnibactin is a chelating compound involved in transporting iron from the bacterial environment into the cell cytoplasm. In Vibrio vulnificus (strain CMCP6), this protein is Probable isochorismatase (venB).